The following is a 316-amino-acid chain: uncharacterized protein (316 aa).

The protein to yeast YGR277c.

This is an uncharacterized protein from Schizosaccharomyces pombe (strain 972 / ATCC 24843) (Fission yeast).